The following is a 207-amino-acid chain: Ribosomal RNA small subunit methyltransferase G (207 aa).

S-adenosyl-L-methionine contacts are provided by residues Gly73, Leu78, 124–125 (VE), and Arg139.

Belongs to the methyltransferase superfamily. RNA methyltransferase RsmG family.

The protein localises to the cytoplasm. It carries out the reaction guanosine(527) in 16S rRNA + S-adenosyl-L-methionine = N(7)-methylguanosine(527) in 16S rRNA + S-adenosyl-L-homocysteine. In terms of biological role, specifically methylates the N7 position of guanine in position 527 of 16S rRNA. The polypeptide is Ribosomal RNA small subunit methyltransferase G (Escherichia fergusonii (strain ATCC 35469 / DSM 13698 / CCUG 18766 / IAM 14443 / JCM 21226 / LMG 7866 / NBRC 102419 / NCTC 12128 / CDC 0568-73)).